The sequence spans 392 residues: Putative glutamate--cysteine ligase 2 (392 aa).

The tract at residues M1–R21 is disordered. The span at A9–A19 shows a compositional bias: low complexity.

It belongs to the glutamate--cysteine ligase type 2 family. YbdK subfamily.

It catalyses the reaction L-cysteine + L-glutamate + ATP = gamma-L-glutamyl-L-cysteine + ADP + phosphate + H(+). Its function is as follows. ATP-dependent carboxylate-amine ligase which exhibits weak glutamate--cysteine ligase activity. This is Putative glutamate--cysteine ligase 2 from Mycobacterium ulcerans (strain Agy99).